A 108-amino-acid polypeptide reads, in one-letter code: uncharacterized protein (108 aa).

This is an uncharacterized protein from Saccharomyces cerevisiae (strain ATCC 204508 / S288c) (Baker's yeast).